The following is a 130-amino-acid chain: Sec-independent protein translocase protein TatB (130 aa).

Residues 1–21 form a helical membrane-spanning segment; that stretch reads MFDIGFTELTLIFIIGLVVLG. Basic and acidic residues-rich tracts occupy residues 57 to 67 and 111 to 130; these read QDMQERMEKQM and PSDK…RRHD. Residues 57-130 are disordered; sequence QDMQERMEKQ…NHDQDSRRHD (74 aa).

This sequence belongs to the TatB family. As to quaternary structure, the Tat system comprises two distinct complexes: a TatABC complex, containing multiple copies of TatA, TatB and TatC subunits, and a separate TatA complex, containing only TatA subunits. Substrates initially bind to the TatABC complex, which probably triggers association of the separate TatA complex to form the active translocon.

It localises to the cell inner membrane. Its function is as follows. Part of the twin-arginine translocation (Tat) system that transports large folded proteins containing a characteristic twin-arginine motif in their signal peptide across membranes. Together with TatC, TatB is part of a receptor directly interacting with Tat signal peptides. TatB may form an oligomeric binding site that transiently accommodates folded Tat precursor proteins before their translocation. The chain is Sec-independent protein translocase protein TatB from Alcanivorax borkumensis (strain ATCC 700651 / DSM 11573 / NCIMB 13689 / SK2).